The primary structure comprises 205 residues: Dephospho-CoA kinase (205 aa).

Residues 13 to 205 form the DPCK domain; it reads RIGLTGGIAS…KWINTIREIL (193 aa). 21–26 serves as a coordination point for ATP; that stretch reads ASGKST.

Belongs to the CoaE family.

It is found in the cytoplasm. The catalysed reaction is 3'-dephospho-CoA + ATP = ADP + CoA + H(+). It functions in the pathway cofactor biosynthesis; coenzyme A biosynthesis; CoA from (R)-pantothenate: step 5/5. Catalyzes the phosphorylation of the 3'-hydroxyl group of dephosphocoenzyme A to form coenzyme A. This chain is Dephospho-CoA kinase, found in Prochlorococcus marinus (strain MIT 9312).